Here is a 255-residue protein sequence, read N- to C-terminus: Urease accessory protein UreD 1 (255 aa).

It belongs to the UreD family. As to quaternary structure, ureD, UreF and UreG form a complex that acts as a GTP-hydrolysis-dependent molecular chaperone, activating the urease apoprotein by helping to assemble the nickel containing metallocenter of UreC. The UreE protein probably delivers the nickel.

The protein resides in the cytoplasm. Functionally, required for maturation of urease via the functional incorporation of the urease nickel metallocenter. The chain is Urease accessory protein UreD 1 from Saccharopolyspora erythraea (strain ATCC 11635 / DSM 40517 / JCM 4748 / NBRC 13426 / NCIMB 8594 / NRRL 2338).